An 861-amino-acid chain; its full sequence is DNA mismatch repair protein MutS (861 aa).

618 to 625 (GPNMGGKS) lines the ATP pocket.

It belongs to the DNA mismatch repair MutS family.

This protein is involved in the repair of mismatches in DNA. It is possible that it carries out the mismatch recognition step. This protein has a weak ATPase activity. The polypeptide is DNA mismatch repair protein MutS (Shewanella sp. (strain MR-7)).